We begin with the raw amino-acid sequence, 292 residues long: Leucine-rich repeat-containing protein 10B (292 aa).

The disordered stretch occupies residues 1 to 20 (MGIAESTPDELPSDAEEQLR). The segment covering 7-16 (TPDELPSDAE) has biased composition (acidic residues). LRR repeat units lie at residues 22–43 (GDQQLELSGRRLRRLPSAVCAL), 45–66 (RLQKLYVSGTGLRELPEEIEEL), 68–90 (ELRILALDFNKLERLPDGLCRLP), 91–112 (RLTRLYLGGNRLLALPADFAQL), 114–136 (SLRCLWIEGNFLRRFPRPLLRLV), 137–158 (ALQSLQMGDNRLRALPAELPRM), 160–181 (GLRGLWLYGNRFEEFPPALLRM), 183–204 (RLHILDLDRNRLGGFPDLHPLR), and 205–226 (ALRVFSYDHNPVTGPPRVADTV). Residues 236 to 261 (RMAERDEPTPRPPPRRPARAFEDEEE) form a disordered region.

The chain is Leucine-rich repeat-containing protein 10B (LRRC10B) from Homo sapiens (Human).